Reading from the N-terminus, the 69-residue chain is Putative membrane protein insertion efficiency factor (69 aa).

This sequence belongs to the UPF0161 family.

The protein resides in the cell membrane. In terms of biological role, could be involved in insertion of integral membrane proteins into the membrane. The polypeptide is Putative membrane protein insertion efficiency factor (Alkaliphilus oremlandii (strain OhILAs) (Clostridium oremlandii (strain OhILAs))).